The primary structure comprises 301 residues: Quinolinate synthase (301 aa).

2 residues coordinate iminosuccinate: H21 and S38. Residue C83 participates in [4Fe-4S] cluster binding. Residues 109–111 (YIN) and S126 each bind iminosuccinate. C169 contacts [4Fe-4S] cluster. Iminosuccinate-binding positions include 195 to 197 (HPE) and T212. C257 is a binding site for [4Fe-4S] cluster.

Belongs to the quinolinate synthase family. Type 2 subfamily. Requires [4Fe-4S] cluster as cofactor.

Its subcellular location is the cytoplasm. The enzyme catalyses iminosuccinate + dihydroxyacetone phosphate = quinolinate + phosphate + 2 H2O + H(+). Its pathway is cofactor biosynthesis; NAD(+) biosynthesis; quinolinate from iminoaspartate: step 1/1. Catalyzes the condensation of iminoaspartate with dihydroxyacetone phosphate to form quinolinate. The sequence is that of Quinolinate synthase from Clostridium perfringens (strain 13 / Type A).